We begin with the raw amino-acid sequence, 153 residues long: Ribosome maturation factor RimP (153 aa).

Belongs to the RimP family.

It localises to the cytoplasm. Required for maturation of 30S ribosomal subunits. This Burkholderia pseudomallei (strain 1710b) protein is Ribosome maturation factor RimP.